Consider the following 457-residue polypeptide: Mannose-6-phosphate isomerase (457 aa).

The Zn(2+) site is built by Gln-108, His-110, Glu-135, and His-292. Arg-311 is a catalytic residue.

This sequence belongs to the mannose-6-phosphate isomerase type 1 family. Zn(2+) is required as a cofactor.

It localises to the cytoplasm. The enzyme catalyses D-mannose 6-phosphate = D-fructose 6-phosphate. Its pathway is nucleotide-sugar biosynthesis; GDP-alpha-D-mannose biosynthesis; alpha-D-mannose 1-phosphate from D-fructose 6-phosphate: step 1/2. Involved in the synthesis of the GDP-mannose and dolichol-phosphate-mannose required for a number of critical mannosyl transfer reactions. This Aspergillus fumigatus (strain ATCC MYA-4609 / CBS 101355 / FGSC A1100 / Af293) (Neosartorya fumigata) protein is Mannose-6-phosphate isomerase (pmi1).